Reading from the N-terminus, the 673-residue chain is Poly(glycerol-phosphate) alpha-glucosyltransferase (673 aa).

Serine 2 carries the post-translational modification Phosphoserine.

It belongs to the glycosyltransferase group 1 family. Glycosyltransferase 4 subfamily.

Its subcellular location is the cytoplasm. It catalyses the reaction 4-O-{[(2R)-1-glycerylphospho](n)-(2R)-1-glycerylphospho}-N-acetyl-beta-D-mannosaminyl-(1-&gt;4)-N-acetyl-alpha-D-glucosaminyl undecaprenyl diphosphate + n UDP-alpha-D-glucose = 4-O-{[(2R)-2-alpha-D-glucosyl-1-glycerylphospho](n)-(2R)-1-glycerylphospho}-N-acetyl-beta-D-mannosaminyl-(1-&gt;4)-N-acetyl-alpha-D-glucosaminyl undecaprenyl diphosphate + n UDP + n H(+). It participates in cell wall biogenesis; poly(glycerol phosphate) teichoic acid biosynthesis. Functionally, catalyzes the addition of glucose to the C-2 hydroxy group of the glycerol units in teichoic acid. This Bacillus subtilis (strain 168) protein is Poly(glycerol-phosphate) alpha-glucosyltransferase (tagE).